Reading from the N-terminus, the 613-residue chain is Dihydroxy-acid dehydratase (613 aa).

A Mg(2+)-binding site is contributed by Asp-81. Cys-122 serves as a coordination point for [2Fe-2S] cluster. Mg(2+)-binding residues include Asp-123 and Lys-124. Lys-124 is modified (N6-carboxylysine). Position 195 (Cys-195) interacts with [2Fe-2S] cluster. Glu-491 serves as a coordination point for Mg(2+). Ser-517 functions as the Proton acceptor in the catalytic mechanism.

The protein belongs to the IlvD/Edd family. As to quaternary structure, homodimer. Requires [2Fe-2S] cluster as cofactor. It depends on Mg(2+) as a cofactor.

It catalyses the reaction (2R)-2,3-dihydroxy-3-methylbutanoate = 3-methyl-2-oxobutanoate + H2O. The catalysed reaction is (2R,3R)-2,3-dihydroxy-3-methylpentanoate = (S)-3-methyl-2-oxopentanoate + H2O. The protein operates within amino-acid biosynthesis; L-isoleucine biosynthesis; L-isoleucine from 2-oxobutanoate: step 3/4. Its pathway is amino-acid biosynthesis; L-valine biosynthesis; L-valine from pyruvate: step 3/4. Its function is as follows. Functions in the biosynthesis of branched-chain amino acids. Catalyzes the dehydration of (2R,3R)-2,3-dihydroxy-3-methylpentanoate (2,3-dihydroxy-3-methylvalerate) into 2-oxo-3-methylpentanoate (2-oxo-3-methylvalerate) and of (2R)-2,3-dihydroxy-3-methylbutanoate (2,3-dihydroxyisovalerate) into 2-oxo-3-methylbutanoate (2-oxoisovalerate), the penultimate precursor to L-isoleucine and L-valine, respectively. This Buchnera aphidicola subsp. Schlechtendalia chinensis protein is Dihydroxy-acid dehydratase.